The chain runs to 193 residues: MAFIISIIIAYLLGSLSFAVIVAKLMKLPDPRTTGSGNAGATNMLRVGGRQAAFYVLLGDAAKGLIAVLIARFLNVQGVSLAFVGLVAVLGHLFPVYFKFRGGKGVATMMGVLLGLSFWIGLFVIATWVIVVSIFRYSSVAALVSAVAAPIYTIIAGRTDYLFPVLIIAILIIWKHWENFQRLRKGTEDKVKL.

5 helical membrane passes run 2–22 (AFII…AVIV), 51–71 (QAAF…VLIA), 78–98 (GVSL…PVYF), 112–132 (VLLG…VIVV), and 154–174 (IIAG…LIIW).

This sequence belongs to the PlsY family. Probably interacts with PlsX.

The protein resides in the cell inner membrane. It catalyses the reaction an acyl phosphate + sn-glycerol 3-phosphate = a 1-acyl-sn-glycero-3-phosphate + phosphate. It functions in the pathway lipid metabolism; phospholipid metabolism. Catalyzes the transfer of an acyl group from acyl-phosphate (acyl-PO(4)) to glycerol-3-phosphate (G3P) to form lysophosphatidic acid (LPA). This enzyme utilizes acyl-phosphate as fatty acyl donor, but not acyl-CoA or acyl-ACP. The protein is Glycerol-3-phosphate acyltransferase of Coxiella burnetii (strain CbuK_Q154) (Coxiella burnetii (strain Q154)).